Consider the following 628-residue polypeptide: uncharacterized protein (628 aa).

It belongs to the ATP-dependent AMP-binding enzyme family.

This is an uncharacterized protein from Pseudomonas aeruginosa (strain ATCC 15692 / DSM 22644 / CIP 104116 / JCM 14847 / LMG 12228 / 1C / PRS 101 / PAO1).